The following is a 296-amino-acid chain: MDHIDKKCSMNAIVGTTNAGKSTLINMLVGRKVAAVTPKVQTTRVRMHAVLNNENVQLIFIDTPGIFSPKTKLEKFIVKHAWMSLKGIENVILLLDVKNYLNKHIEKIISRIKQSNINAILVVNKIDMVSQALVDKAIEYMYSLHNFSKTFTISALHDIGLNRLINYLCEISPSGPWLYPEGQISDAPLKFFIAEITREKLFLSLHHELPYSLSVVTEALEEKVDGSLIVKQVIYVTKDNHKTIILGKKGEMIKKISIESRSELEKILDLKIHLFLFVKVRELWQDHLNECVGYVE.

One can recognise an Era-type G domain in the interval 7-174 (KCSMNAIVGT…INYLCEISPS (168 aa)). Residues 15–22 (GTTNAGKS) form a G1 region. 15 to 22 (GTTNAGKS) contributes to the GTP binding site. The G2 stretch occupies residues 41–45 (QTTRV). Residues 62-65 (DTPG) are G3. GTP contacts are provided by residues 62-66 (DTPGI) and 124-127 (NKID). A G4 region spans residues 124-127 (NKID). A G5 region spans residues 153–155 (ISA). Residues 205–282 (LHHELPYSLS…HLFLFVKVRE (78 aa)) enclose the KH type-2 domain.

It belongs to the TRAFAC class TrmE-Era-EngA-EngB-Septin-like GTPase superfamily. Era GTPase family. As to quaternary structure, monomer.

It localises to the cytoplasm. Its subcellular location is the cell inner membrane. Functionally, an essential GTPase that binds both GDP and GTP, with rapid nucleotide exchange. Plays a role in 16S rRNA processing and 30S ribosomal subunit biogenesis and possibly also in cell cycle regulation and energy metabolism. The sequence is that of GTPase Era from Ehrlichia canis (strain Jake).